A 643-amino-acid chain; its full sequence is Threonine--tRNA ligase (643 aa).

The region spanning 1 to 61 (MPIITLPDGS…EQDATLEIIT (61 aa)) is the TGS domain. Positions 243 to 534 (DHRKIGKALD…ITEEYAGFFP (292 aa)) are catalytic. Zn(2+) is bound by residues C334, H385, and H511.

Belongs to the class-II aminoacyl-tRNA synthetase family. As to quaternary structure, homodimer. Requires Zn(2+) as cofactor.

It is found in the cytoplasm. The catalysed reaction is tRNA(Thr) + L-threonine + ATP = L-threonyl-tRNA(Thr) + AMP + diphosphate + H(+). Catalyzes the attachment of threonine to tRNA(Thr) in a two-step reaction: L-threonine is first activated by ATP to form Thr-AMP and then transferred to the acceptor end of tRNA(Thr). Also edits incorrectly charged L-seryl-tRNA(Thr). This Haemophilus influenzae (strain ATCC 51907 / DSM 11121 / KW20 / Rd) protein is Threonine--tRNA ligase.